The primary structure comprises 104 residues: Small ribosomal subunit protein uS10 (104 aa).

It belongs to the universal ribosomal protein uS10 family. As to quaternary structure, part of the 30S ribosomal subunit.

Involved in the binding of tRNA to the ribosomes. This chain is Small ribosomal subunit protein uS10, found in Ruegeria pomeroyi (strain ATCC 700808 / DSM 15171 / DSS-3) (Silicibacter pomeroyi).